Here is a 1098-residue protein sequence, read N- to C-terminus: Transcription elongation regulator 1 (1098 aa).

The segment covering 1-15 (MAERGGDGGESERFN) has biased composition (basic and acidic residues). A disordered region spans residues 1-105 (MAERGGDGGE…RPPFMPPPMS (105 aa)). Phosphoserine is present on serine 11. Arginine 20 is modified (omega-N-methylarginine). Asymmetric dimethylarginine occurs at positions 28, 30, 41, and 48. The segment covering 32 to 105 (PAPPPNAVMR…RPPFMPPPMS (74 aa)) has biased composition (pro residues). The region spanning 131–164 (PPTEEIWVENKTPDGKVYYYNARTRESAWTKPDG) is the WW 1 domain. A coiled-coil region spans residues 184-244 (QAQAQAQAQA…AQAQAQAQVQ (61 aa)). The span at 259-333 (STPTTSSPAP…PTATPVQTVP (75 aa)) shows a compositional bias: low complexity. Positions 259–348 (STPTTSSPAP…TLPPAVPHSV (90 aa)) are disordered. The span at 334-344 (QPHPQTLPPAV) shows a compositional bias: pro residues. In terms of domain architecture, WW 2 spans 429 to 462 (ATAVSEWTEYKTADGKTYYYNNRTLESTWEKPQE). 2 stretches are compositionally biased toward basic and acidic residues: residues 469 to 481 (LEEK…KEPS) and 496 to 506 (EEPIKEIKEEP). The interval 469 to 526 (LEEKIKEPIKEPSEEPLPMETEEEDPKEEPIKEIKEEPKEEEMTEEEKAAQKAKPVAT) is disordered. Residues lysine 503 and lysine 507 each participate in a glycyl lysine isopeptide (Lys-Gly) (interchain with G-Cter in SUMO2) cross-link. Residues 528–561 (PIPGTPWCVVWTGDERVFFYNPTTRLSMWDRPDD) enclose the WW 3 domain. Positions 606–655 (AIKEEQELMEEINEDEPVKAKKRKRDDNKDIDSEKEAAMEAEIKAARERA) form a coiled coil. Residue lysine 608 forms a Glycyl lysine isopeptide (Lys-Gly) (interchain with G-Cter in SUMO2) linkage. Residues 615-640 (EEINEDEPVKAKKRKRDDNKDIDSEK) are disordered. Positions 626-630 (KKRKR) match the Nuclear localization signal motif. Residues 630-640 (RDDNKDIDSEK) are compositionally biased toward basic and acidic residues. Position 638 is a phosphoserine (serine 638). 3 FF domains span residues 659–712 (LEAR…YVKT), 725–779 (IMQA…FVAA), and 791–846 (RGEK…YIEK). Serine 834 carries the post-translational modification Phosphoserine. Residues 844–906 (IEKIAKNLDS…EEAIQNFKAL (63 aa)) are a coiled coil. The interval 870-895 (REREREVQKARSEQTKEIDREREQHK) is disordered. 3 FF domains span residues 896–952 (REEA…HIEA), 954–1010 (TKKK…YIRD), and 1012–1077 (YITA…YVDD). Phosphoserine is present on serine 933. A disordered region spans residues 1076–1098 (DDLDRRGPPPPPTASEPTRRSTK).

As to quaternary structure, binds formin. Interacts (via the second WW domain) with TREX1 (via proline-rich region). Binds RNA polymerase II, HD and SF1. In terms of tissue distribution, detected in brain neurons.

Its subcellular location is the nucleus. In terms of biological role, transcription factor that binds RNA polymerase II and inhibits the elongation of transcripts from target promoters. Regulates transcription elongation in a TATA box-dependent manner. Necessary for TAT-dependent activation of the human immunodeficiency virus type 1 (HIV-1) promoter. This Homo sapiens (Human) protein is Transcription elongation regulator 1 (TCERG1).